We begin with the raw amino-acid sequence, 876 residues long: MGPLSREAWAQRLGSFRASPSAFLAGAEGEDLGHDLLSDLRSEKLSELIKVSLLTLSLEYSDKLWPDALAAEAAATSLLDTLVLLPSKPSALRRLLLLAATTALVSGGALGPTSEASSRLLPLLLGLASGQDMGRSFGTTSEQRHLQATACECLGELERCKPGLLAGALGVLRSLLGQKGPIQPVSLLLALVLHNTLVVQSRFGAGLQGLLVAKDSSPGSCPWDWTLAEEWDDHLKPQAHGWPTAGEEERDFPILDPNPEDTRELKAAVAQLLDTSYLLTPVAQAQLVWLLGWALQGLRGQPPVLFKPQLVRLLGTAQLTLLHSVLSLKAAFGEALFTAQDEALLLRRLTLVAQHPALPSPTHLFYLHCILSFPENCPLGPEGEEAAPLLLGPQLRRGLMPSLLHDPMVLLARLHLLCLLCADDEEEEKGQLQGPQWFLQELLAGLQQRAAVDGGPRALATLCFQASYLVTSCLTRQPTVQTSLVHGLAQLYRARPSLAPHFVDLLDEVSPELREPLRKVLLREVVARPGKNEALRWHLQMLAKVAEGATQSAILGFLQAAAIHCTDWGLHQALLRVCRALLRTGGGEGLADLLQELARQLENADGRDHARLYYVLLSHLSSSKLGMALGPSLAAPALASSLMAENQGFASALMVQETSAPIQLSVGPQKAKGPLPVLHLQVQALDTPVYSLELRFRVEGQLYEPVEAVHIPSVRPGQPAHPLHLPLQPRSPAPARLHVRALYTTPAGLTCHAHLPPLSVNFADLFLPFPQLPKGSELCFFDELWNSCLPKGVESRVWCPLGPQGLEALVSQHLEPFVVVAQPPTTYLIAVRLPPHSMLLLRLEKAQVHGVPVALRTDDWAVLPLVGDYLRGLAAH.

As to quaternary structure, probably part of the adaptor protein complex 5 (AP-5), a tetramer composed of AP5B1, AP5M1, AP5S1 and AP5Z1. Interacts with ZFYVE26 and SPG11.

Its function is as follows. As part of AP-5, a probable fifth adaptor protein complex, it may be involved in endosomal transport. In Rattus norvegicus (Rat), this protein is AP-5 complex subunit beta-1 (Ap5b1).